A 134-amino-acid chain; its full sequence is Neuropeptide-like peptide 11 (134 aa).

The signal sequence occupies residues 1–20; the sequence is MMSTLALVSLAIFGIAVVCA. Positions 21–106 are excised as a propeptide; it reads APKPATVPVA…YNRLIDAGKK (86 aa). Ala-131 carries the alanine amide modification.

In Caenorhabditis elegans, this protein is Neuropeptide-like peptide 11 (nlp-11).